We begin with the raw amino-acid sequence, 364 residues long: Probable G-protein coupled receptor AH9.4 (364 aa).

M1 is a topological domain (extracellular). A helical transmembrane segment spans residues 2–22 (AFLQSAYLVMVFTVPIAGVIL). The Cytoplasmic portion of the chain corresponds to 23 to 48 (NTYVLRKLIRVARKSVVRFETTSGLP). Residues 49 to 69 (LAAMSVGDSITLCALLMQAIF) traverse the membrane as a helical segment. Topologically, residues 70–89 (HITPKGEVPTVVLSSICKFG) are extracellular. A helical membrane pass occupies residues 90-110 (IFLIHSTSAFSVWCWFFLSVL). The Cytoplasmic portion of the chain corresponds to 111-130 (RYIAVFHPFKYRTIWRQPRN). The chain crosses the membrane as a helical span at residues 131 to 151 (ALKFLAGAVGMFQIYTLIFVT). Over 152-177 (YRQEEKSCGEYDVFHESAFKHVHLLD) the chain is Extracellular. The chain crosses the membrane as a helical span at residues 178–198 (IFLFYAIPSLLRITLDFLVLI). Residues 199 to 277 (HCYSPFSVEG…KKKTAMVMRS (79 aa)) are Cytoplasmic-facing. The helical transmembrane segment at 278–298 (ILISVLNLLLNLPSHIFRAWA) threads the bilayer. Residues 299 to 315 (SYDESSLENEIVRTLEP) are Extracellular-facing. A helical transmembrane segment spans residues 316-336 (IAQMMYFSQFACNAFYLATSI). Topologically, residues 337-364 (YETNGSPRNTVISSSNRHVSRCISDDEA) are cytoplasmic.

This sequence belongs to the G-protein coupled receptor 1 family.

It localises to the cell membrane. Functionally, not known. Putative receptor. The protein is Probable G-protein coupled receptor AH9.4 of Caenorhabditis elegans.